Consider the following 213-residue polypeptide: ATP phosphoribosyltransferase (213 aa).

The protein belongs to the ATP phosphoribosyltransferase family. Short subfamily. In terms of assembly, heteromultimer composed of HisG and HisZ subunits.

The protein localises to the cytoplasm. It carries out the reaction 1-(5-phospho-beta-D-ribosyl)-ATP + diphosphate = 5-phospho-alpha-D-ribose 1-diphosphate + ATP. It participates in amino-acid biosynthesis; L-histidine biosynthesis; L-histidine from 5-phospho-alpha-D-ribose 1-diphosphate: step 1/9. Functionally, catalyzes the condensation of ATP and 5-phosphoribose 1-diphosphate to form N'-(5'-phosphoribosyl)-ATP (PR-ATP). Has a crucial role in the pathway because the rate of histidine biosynthesis seems to be controlled primarily by regulation of HisG enzymatic activity. This Anoxybacillus flavithermus (strain DSM 21510 / WK1) protein is ATP phosphoribosyltransferase.